A 159-amino-acid chain; its full sequence is 2-C-methyl-D-erythritol 2,4-cyclodiphosphate synthase (159 aa).

2 residues coordinate a divalent metal cation: Asp-10 and His-12. 4-CDP-2-C-methyl-D-erythritol 2-phosphate-binding positions include 10–12 (DVH) and 36–37 (HS). Residue His-44 coordinates a divalent metal cation. 4-CDP-2-C-methyl-D-erythritol 2-phosphate is bound by residues 58–60 (DIG), 63–67 (FANTD), 134–137 (TTNE), and Arg-144.

Belongs to the IspF family. In terms of assembly, homotrimer. Requires a divalent metal cation as cofactor.

The catalysed reaction is 4-CDP-2-C-methyl-D-erythritol 2-phosphate = 2-C-methyl-D-erythritol 2,4-cyclic diphosphate + CMP. Its pathway is isoprenoid biosynthesis; isopentenyl diphosphate biosynthesis via DXP pathway; isopentenyl diphosphate from 1-deoxy-D-xylulose 5-phosphate: step 4/6. Its function is as follows. Involved in the biosynthesis of isopentenyl diphosphate (IPP) and dimethylallyl diphosphate (DMAPP), two major building blocks of isoprenoid compounds. Catalyzes the conversion of 4-diphosphocytidyl-2-C-methyl-D-erythritol 2-phosphate (CDP-ME2P) to 2-C-methyl-D-erythritol 2,4-cyclodiphosphate (ME-CPP) with a corresponding release of cytidine 5-monophosphate (CMP). This chain is 2-C-methyl-D-erythritol 2,4-cyclodiphosphate synthase, found in Cytophaga hutchinsonii (strain ATCC 33406 / DSM 1761 / CIP 103989 / NBRC 15051 / NCIMB 9469 / D465).